Reading from the N-terminus, the 150-residue chain is MNVILLDKIANLGNLGDQVSVKAGYARNFLLPQGKAVVANTANTEVFEARRADLEAKLAADLAAATQRAEKISALESVVIASKAGDEGKLFGSIGNRDIADAVTAAGVELAKSEVRLPLGAIRTTGEFEVEVQVHTEVKAIVKLSVVAEA.

Belongs to the bacterial ribosomal protein bL9 family.

Its function is as follows. Binds to the 23S rRNA. The protein is Large ribosomal subunit protein bL9 of Shewanella pealeana (strain ATCC 700345 / ANG-SQ1).